A 252-amino-acid polypeptide reads, in one-letter code: 2-succinyl-6-hydroxy-2,4-cyclohexadiene-1-carboxylate synthase (252 aa).

Belongs to the AB hydrolase superfamily. MenH family. In terms of assembly, monomer.

The enzyme catalyses 5-enolpyruvoyl-6-hydroxy-2-succinyl-cyclohex-3-ene-1-carboxylate = (1R,6R)-6-hydroxy-2-succinyl-cyclohexa-2,4-diene-1-carboxylate + pyruvate. It participates in quinol/quinone metabolism; 1,4-dihydroxy-2-naphthoate biosynthesis; 1,4-dihydroxy-2-naphthoate from chorismate: step 3/7. Its pathway is quinol/quinone metabolism; menaquinone biosynthesis. In terms of biological role, catalyzes a proton abstraction reaction that results in 2,5-elimination of pyruvate from 2-succinyl-5-enolpyruvyl-6-hydroxy-3-cyclohexene-1-carboxylate (SEPHCHC) and the formation of 2-succinyl-6-hydroxy-2,4-cyclohexadiene-1-carboxylate (SHCHC). This chain is 2-succinyl-6-hydroxy-2,4-cyclohexadiene-1-carboxylate synthase, found in Shigella flexneri serotype 5b (strain 8401).